A 268-amino-acid polypeptide reads, in one-letter code: MSEKIVFYGKEQLQRIRIFNYSESNDKTLIVLHGGGWRDPRNSYNDFEDMANYILEEKKATNINIIGIDYRLSPFIKHPVHLIDVLTAFRYILENYKTGQLSIVGHSVGATLLLEILNYVEIIQTGLEQLETSEPSIEELQTLFDFISKNLTFKTMYFLDGIYDVRALLEEYPSYDFFVKSAFVSTVAIEEASQLSWKQHNEAFKIAVDKYEILHSLEDELLSLNQPKLFAKYLQDRKIECSFRTGNWGEHEQVYRSQAVSEHVLQNM.

The HGGXW motif lies at 33–37 (HGGGW). Residue Ser-107 is the Nucleophile of the active site. Active-site residues include Asp-219 and His-251.

It belongs to the kynurenine formamidase family. In terms of assembly, homodimer.

It catalyses the reaction N-formyl-L-kynurenine + H2O = L-kynurenine + formate + H(+). The protein operates within amino-acid degradation; L-tryptophan degradation via kynurenine pathway; L-kynurenine from L-tryptophan: step 2/2. Its function is as follows. Catalyzes the hydrolysis of N-formyl-L-kynurenine to L-kynurenine, the second step in the kynurenine pathway of tryptophan degradation. Kynurenine may be further oxidized to nicotinic acid, NAD(H) and NADP(H). Required for elimination of toxic metabolites. This Scheffersomyces stipitis (strain ATCC 58785 / CBS 6054 / NBRC 10063 / NRRL Y-11545) (Yeast) protein is Kynurenine formamidase.